The following is a 419-amino-acid chain: Putative nickel insertion protein (419 aa).

Residues His-69–Leu-90 form a disordered region. The span at Thr-79 to Arg-88 shows a compositional bias: basic residues.

Belongs to the LarC family.

The chain is Putative nickel insertion protein from Rippkaea orientalis (strain PCC 8801 / RF-1) (Cyanothece sp. (strain PCC 8801)).